An 84-amino-acid polypeptide reads, in one-letter code: uncharacterized protein (84 aa).

This is an uncharacterized protein from Rickettsia prowazekii (strain Madrid E).